A 395-amino-acid chain; its full sequence is ETS-related transcription factor Elf-3 (395 aa).

Residues 69 to 155 form the PNT domain; the sequence is EPPAVLHLAE…AQLRDLTSSS (87 aa). Residues 200-240 are compositionally biased toward low complexity; that stretch reads ASPYYGSSYGPGAPSPGSSDFSTSGTDTPQSSHSSDSGGSD. The tract at residues 200–275 is disordered; that stretch reads ASPYYGSSYG…HGKRKRGRPR (76 aa). A compositionally biased stretch (basic and acidic residues) spans 246–265; it reads TDSKVFPRDGFPDYKKGEPK. Positions 266 to 275 are enriched in basic residues; that stretch reads HGKRKRGRPR. Residues 297 to 379 constitute a DNA-binding region (ETS); that stretch reads THLWEFIRDI…DGRRLVYKFG (83 aa).

It belongs to the ETS family. In terms of assembly, interacts with TBP. Interacts with CREBBP and EP300; these act as transcriptional coactivators of ELF3 and positively modulate its function. Interacts with XRCC5/KU86 and XRCC6/KU70; these inhibit the ability of ELF3 to bind DNA and negatively modulate its transcriptional activity. Associated with CLND7 and POU2F3. Interacts with ZNF768.

It localises to the cytoplasm. The protein localises to the nucleus. Its function is as follows. Transcriptional activator that binds and transactivates ETS sequences containing the consensus nucleotide core sequence GGA[AT]. Acts synergistically with POU2F3 to transactivate the SPRR2A promoter and with RUNX1 to transactivate the ANGPT1 promoter. Also transactivates collagenase, CCL20, CLND7, FLG, KRT8, NOS2, PTGS2, SPRR2B, TGFBR2 and TGM3 promoters. Represses KRT4 promoter activity. Involved in mediating vascular inflammation. May play an important role in epithelial cell differentiation and tumorigenesis. May be a critical downstream effector of the ERBB2 signaling pathway. May be associated with mammary gland development and involution. Plays an important role in the regulation of transcription with TATA-less promoters in preimplantation embryos, which is essential in preimplantation development. The protein is ETS-related transcription factor Elf-3 of Rattus norvegicus (Rat).